The primary structure comprises 386 residues: MNLFLKKLLKNDATGGVVLIVAAAFAMFLANNDSTRHAYQAMLTLPVQFRFGALDINKDLLLWINDALMALFFLMIGLEVKRELMMGSLKGRERAMFPLIAALGGMLAPGLIYAAFNHQDAQAIHGWAIPTATDIAFALGILALLGSRVPAALKMFLMALAVIDDLGAIVIIALFYTSELSLISLTVAAASIAVLAVLNGCGVRKTSVYLAVGMVLWVAVLKSGVHATLAGVIVGLFIPLKKQEGHSPAIELAHGLHPWVSWLILPLFAFANAGISLSGVSLNGLFSAVPLGITLGLFIGKPLGITLICWLAVKLKIAALPENTRLIDIAAVGVLCGIGFTMSIFIASLAFDGAHEELVTLAKLGILSGSVISALVGYTLLRVKLR.

Helical transmembrane passes span 11–31 (NDATGGVVLIVAAAFAMFLAN), 60–80 (LLLWINDALMALFFLMIGLEV), 96–116 (MFPLIAALGGMLAPGLIYAAF), 126–146 (GWAIPTATDIAFALGILALLG), 155–175 (MFLMALAVIDDLGAIVIIALF), 180–200 (LSLISLTVAAASIAVLAVLNG), 218–238 (VAVLKSGVHATLAGVIVGLFI), 260–280 (VSWLILPLFAFANAGISLSGV), 293–313 (ITLGLFIGKPLGITLICWLAV), 326–346 (LIDIAAVGVLCGIGFTMSIFI), and 358–378 (LVTLAKLGILSGSVISALVGY).

It belongs to the NhaA Na(+)/H(+) (TC 2.A.33) antiporter family.

The protein resides in the cell inner membrane. It carries out the reaction Na(+)(in) + 2 H(+)(out) = Na(+)(out) + 2 H(+)(in). In terms of biological role, na(+)/H(+) antiporter that extrudes sodium in exchange for external protons. The polypeptide is Na(+)/H(+) antiporter NhaA (Erwinia tasmaniensis (strain DSM 17950 / CFBP 7177 / CIP 109463 / NCPPB 4357 / Et1/99)).